The primary structure comprises 571 residues: MRTSQYLLSTLKETPADAVVISHQLLLRAGMIRRLASGLYTWLPMGLRVLRKVETVVREEMNAAGALEVLMPAVQPAELWQESGRWEQYGPELLRLKDRHEREFCVGPTHEEVITDLARNELNSYKQLPINFYQIQTKFRDEIRPRFGLMRGREFIMKDAYSFHLNQESLQATYDGMYQAYSKIFTRLGLDFRPVQADNGSIGGSGSHEFHVLANSGEDDIVFSDSSDYAANIEKAEAVPRESARGAASEDMRLVDTPDTKTIAALVDGFGLPIEKTIKTLVVHGAEEGTLVALIVRGDHELNEIKAANQPLVASPLVFASEAEIRAAIGAGPGSLGPVNLPIACIVDRSVALMSDFAAGANIEDKHYFGVNWERDLPLPEVADLRNVVEGDPSPDGKGTLVIKRGIEVGHIFQLGTKYSEAMKLSVLSEQGKPVNLIMGCYGIGVSRVVAAAIEQNHDERGILWPSALAPFQIALVPLKYETESVRQATDRLYAELTAAGFEVLLDDRDKKTSPGVKFADMELLGIPHRIVVSDRGLNEGVLEYKGRRDSESQNLPIGELMSFITEKLSR.

It belongs to the class-II aminoacyl-tRNA synthetase family. ProS type 1 subfamily. In terms of assembly, homodimer.

It localises to the cytoplasm. It carries out the reaction tRNA(Pro) + L-proline + ATP = L-prolyl-tRNA(Pro) + AMP + diphosphate. Catalyzes the attachment of proline to tRNA(Pro) in a two-step reaction: proline is first activated by ATP to form Pro-AMP and then transferred to the acceptor end of tRNA(Pro). As ProRS can inadvertently accommodate and process non-cognate amino acids such as alanine and cysteine, to avoid such errors it has two additional distinct editing activities against alanine. One activity is designated as 'pretransfer' editing and involves the tRNA(Pro)-independent hydrolysis of activated Ala-AMP. The other activity is designated 'posttransfer' editing and involves deacylation of mischarged Ala-tRNA(Pro). The misacylated Cys-tRNA(Pro) is not edited by ProRS. This is Proline--tRNA ligase from Pseudomonas paraeruginosa (strain DSM 24068 / PA7) (Pseudomonas aeruginosa (strain PA7)).